Consider the following 168-residue polypeptide: MELLSRALFFFLLLSVLSSFSSSSFISDGVFESQSLVLGRNLLQTKKTCPVNFEFMNYTIITSKCKGPKYPPKECCGAFKDFACPYTDQLNDLSSDCATTMFSYINLYGKYPPGLFANQCKEGKEGLECPAGSQLPPETSAEVNAATTSSSRLWLTVSAALLVFVKLF.

The first 23 residues, 1–23 (MELLSRALFFFLLLSVLSSFSSS), serve as a signal peptide directing secretion. N57 carries N-linked (GlcNAc...) asparagine glycosylation. N144 carries GPI-anchor amidated asparagine lipidation. A propeptide spans 145–168 (AATTSSSRLWLTVSAALLVFVKLF) (removed in mature form).

As to quaternary structure, interacts with FER. Expressed in pollen, pollen tubes, sporophytic pistil tissues, in the early stages of female gametophyte development, and in unfertilized, mature ovules. Expressed in roots, lateral roots, shoots, cotyledons, petioles, developing leaves and anther filaments.

It is found in the cell membrane. Component of the FER-regulated Rho GTPase signaling complex. Acts as a chaperone and coreceptor for FER. Required for localization of FER to the plasma membrane. The polypeptide is GPI-anchored protein LLG1 (Arabidopsis thaliana (Mouse-ear cress)).